The chain runs to 124 residues: Acidic phospholipase A2 A (124 aa).

7 cysteine pairs are disulfide-bonded: Cys-26/Cys-116, Cys-28/Cys-44, Cys-43/Cys-95, Cys-49/Cys-124, Cys-50/Cys-88, Cys-57/Cys-81, and Cys-75/Cys-86. Residues Tyr-27, Gly-29, and Gly-31 each contribute to the Ca(2+) site. His-47 is an active-site residue. Asp-48 contacts Ca(2+). Asp-89 is an active-site residue.

This sequence belongs to the phospholipase A2 family. Group II subfamily. D49 sub-subfamily. Ca(2+) serves as cofactor. As to expression, expressed by the venom gland.

The protein resides in the secreted. The catalysed reaction is a 1,2-diacyl-sn-glycero-3-phosphocholine + H2O = a 1-acyl-sn-glycero-3-phosphocholine + a fatty acid + H(+). PLA2 catalyzes the calcium-dependent hydrolysis of the 2-acyl groups in 3-sn-phosphoglycerides. The chain is Acidic phospholipase A2 A from Gloydius halys (Chinese water mocassin).